Reading from the N-terminus, the 123-residue chain is ATP synthase epsilon chain (123 aa).

This sequence belongs to the ATPase epsilon chain family. In terms of assembly, F-type ATPases have 2 components, CF(1) - the catalytic core - and CF(0) - the membrane proton channel. CF(1) has five subunits: alpha(3), beta(3), gamma(1), delta(1), epsilon(1). CF(0) has three main subunits: a, b and c.

The protein localises to the cell membrane. Functionally, produces ATP from ADP in the presence of a proton gradient across the membrane. This is ATP synthase epsilon chain from Corynebacterium diphtheriae (strain ATCC 700971 / NCTC 13129 / Biotype gravis).